Reading from the N-terminus, the 283-residue chain is Orotidine 5'-phosphate decarboxylase (283 aa).

Lys97 functions as the Proton donor in the catalytic mechanism.

It belongs to the OMP decarboxylase family. Type 2 subfamily.

It catalyses the reaction orotidine 5'-phosphate + H(+) = UMP + CO2. Its pathway is pyrimidine metabolism; UMP biosynthesis via de novo pathway; UMP from orotate: step 2/2. The chain is Orotidine 5'-phosphate decarboxylase from Clostridium botulinum (strain ATCC 19397 / Type A).